The primary structure comprises 209 residues: Large ribosomal subunit protein uL3 (209 aa).

The interval 128–156 is disordered; the sequence is FAGGSRTHGQSDRLRAPGSVGGSSDPSRT.

The protein belongs to the universal ribosomal protein uL3 family. Part of the 50S ribosomal subunit. Forms a cluster with proteins L14 and L19.

Its function is as follows. One of the primary rRNA binding proteins, it binds directly near the 3'-end of the 23S rRNA, where it nucleates assembly of the 50S subunit. The sequence is that of Large ribosomal subunit protein uL3 from Prosthecochloris aestuarii (strain DSM 271 / SK 413).